The following is a 264-amino-acid chain: Acyl-[acyl-carrier-protein]--UDP-N-acetylglucosamine O-acyltransferase (264 aa).

This sequence belongs to the transferase hexapeptide repeat family. LpxA subfamily. In terms of assembly, homotrimer.

It is found in the cytoplasm. It catalyses the reaction a (3R)-hydroxyacyl-[ACP] + UDP-N-acetyl-alpha-D-glucosamine = a UDP-3-O-[(3R)-3-hydroxyacyl]-N-acetyl-alpha-D-glucosamine + holo-[ACP]. Its pathway is glycolipid biosynthesis; lipid IV(A) biosynthesis; lipid IV(A) from (3R)-3-hydroxytetradecanoyl-[acyl-carrier-protein] and UDP-N-acetyl-alpha-D-glucosamine: step 1/6. Functionally, involved in the biosynthesis of lipid A, a phosphorylated glycolipid that anchors the lipopolysaccharide to the outer membrane of the cell. In Rickettsia peacockii (strain Rustic), this protein is Acyl-[acyl-carrier-protein]--UDP-N-acetylglucosamine O-acyltransferase.